The primary structure comprises 619 residues: Probable serine/threonine-protein kinase WNK8 (619 aa).

A compositionally biased stretch (basic and acidic residues) spans 1–14; the sequence is MSGARRCGDRRSER. Positions 1 to 30 are disordered; it reads MSGARRCGDRRSERSSVVGDNRNGYVETDP. The Protein kinase domain occupies 35–291; it reads GRLSEVLGKG…AEELLLDPFL (257 aa). Residues 115-118 and K163 each bind ATP; that span reads TELF. The active-site Proton acceptor is the D180. 4 disordered regions span residues 293–335, 419–464, 508–555, and 585–619; these read PPQN…AKTT, YADD…PGPH, CSAS…SMVD, and GFRD…HYMF. Over residues 419-428 the composition is skewed to acidic residues; the sequence is YADDDDDDDV. Over residues 439–448 the composition is skewed to low complexity; it reads SSSPTSSQGS. Over residues 602-619 the composition is skewed to basic residues; that stretch reads QHRRRSSSKVDHKHHYMF.

The protein belongs to the protein kinase superfamily. Ser/Thr protein kinase family. WNK subfamily.

It carries out the reaction L-seryl-[protein] + ATP = O-phospho-L-seryl-[protein] + ADP + H(+). The catalysed reaction is L-threonyl-[protein] + ATP = O-phospho-L-threonyl-[protein] + ADP + H(+). This is Probable serine/threonine-protein kinase WNK8 (WNK8) from Oryza sativa subsp. japonica (Rice).